The chain runs to 247 residues: MQQIEKYIKKKRNATDVQVKKYKQALTEIGIKYDYEFAHVAVPNHATGRFEYFKWDWMTSTTSSHSEIVEIFKEIVMILQEAKNNQTQYENFASRLDSNTKDILAFNIKQHNIPIIHLSQNELVRKALAEAEYCTKTSDVTAAFKNYFSKLNPDGVVEFMNCAKGTTINVDGCIGTSLLDNAVNIKYPATWNGIFTQNFFIENGITNPYASFEDKIDKTVQEDSVNKSTIEEVQIEQVELIGGASDC.

This is an uncharacterized protein from Rickettsia prowazekii (strain Madrid E).